The primary structure comprises 204 residues: Leucyl/phenylalanyl-tRNA--protein transferase (204 aa).

It belongs to the L/F-transferase family.

It localises to the cytoplasm. The enzyme catalyses N-terminal L-lysyl-[protein] + L-leucyl-tRNA(Leu) = N-terminal L-leucyl-L-lysyl-[protein] + tRNA(Leu) + H(+). It catalyses the reaction N-terminal L-arginyl-[protein] + L-leucyl-tRNA(Leu) = N-terminal L-leucyl-L-arginyl-[protein] + tRNA(Leu) + H(+). The catalysed reaction is L-phenylalanyl-tRNA(Phe) + an N-terminal L-alpha-aminoacyl-[protein] = an N-terminal L-phenylalanyl-L-alpha-aminoacyl-[protein] + tRNA(Phe). Its function is as follows. Functions in the N-end rule pathway of protein degradation where it conjugates Leu, Phe and, less efficiently, Met from aminoacyl-tRNAs to the N-termini of proteins containing an N-terminal arginine or lysine. The polypeptide is Leucyl/phenylalanyl-tRNA--protein transferase (Rhizobium etli (strain CIAT 652)).